The sequence spans 271 residues: Serine protease SP24D (271 aa).

The signal sequence occupies residues 1 to 22; sequence MTLADRVPLALAALAYLALVSG. A propeptide spans 23–49 (activation peptide); it reads VRFHLSEQNDVLPGGSQARRPFFQGAR. The region spanning 50 to 269 is the Peptidase S1 domain; that stretch reads IVGGSVASEG…FVTWIQTTMR (220 aa). A disulfide bridge links C75 with C91. Active-site charge relay system residues include H90 and D136. Intrachain disulfides connect C199–C211 and C221–C246. The Charge relay system role is filled by S225.

The protein belongs to the peptidase S1 family. In terms of tissue distribution, highest level of adult expression is in the thorax.

This Anopheles gambiae (African malaria mosquito) protein is Serine protease SP24D (Sp24D).